A 152-amino-acid chain; its full sequence is Large ribosomal subunit protein uL11 (152 aa).

Belongs to the universal ribosomal protein uL11 family. In terms of assembly, part of the ribosomal stalk of the 50S ribosomal subunit. Interacts with L10 and the large rRNA to form the base of the stalk. L10 forms an elongated spine to which L12 dimers bind in a sequential fashion forming a multimeric L10(L12)X complex. In terms of processing, one or more lysine residues are methylated.

Forms part of the ribosomal stalk which helps the ribosome interact with GTP-bound translation factors. In Mycoplasmoides gallisepticum (strain R(low / passage 15 / clone 2)) (Mycoplasma gallisepticum), this protein is Large ribosomal subunit protein uL11.